We begin with the raw amino-acid sequence, 537 residues long: Phosphoenolpyruvate carboxykinase (ATP) (537 aa).

Substrate is bound by residues arginine 61, tyrosine 195, and lysine 201. ATP is bound by residues lysine 201, histidine 220, and 236-244; that span reads GLSGTGKTT. Residues lysine 201 and histidine 220 each contribute to the Mn(2+) site. Residue aspartate 257 participates in Mn(2+) binding. The ATP site is built by glutamate 285, arginine 323, and threonine 448. Arginine 323 provides a ligand contact to substrate.

Belongs to the phosphoenolpyruvate carboxykinase (ATP) family. Mn(2+) is required as a cofactor.

It is found in the cytoplasm. The enzyme catalyses oxaloacetate + ATP = phosphoenolpyruvate + ADP + CO2. The protein operates within carbohydrate biosynthesis; gluconeogenesis. Its function is as follows. Involved in the gluconeogenesis. Catalyzes the conversion of oxaloacetate (OAA) to phosphoenolpyruvate (PEP) through direct phosphoryl transfer between the nucleoside triphosphate and OAA. The protein is Phosphoenolpyruvate carboxykinase (ATP) of Rhodopseudomonas palustris (strain TIE-1).